A 756-amino-acid polypeptide reads, in one-letter code: 1-phosphatidylinositol 4,5-bisphosphate phosphodiesterase delta-1 (756 aa).

In terms of domain architecture, PH spans A21–H130. Residues K30–K57 are substrate binding. 2 consecutive EF-hand domains span residues K140 to Q175 and V176 to R211. The Ca(2+) site is built by D153, N155, D157, K159, E164, D189, S191, T193, S195, and E200. S191 carries an O-linked (GlcNAc) serine glycan. Residue T193 is glycosylated (O-linked (GlcNAc) threonine). Residues Q296 to K440 enclose the PI-PLC X-box domain. Residue H311 is part of the active site. N312, E341, and D343 together coordinate Ca(2+). H356 is an active-site residue. E390 lines the Ca(2+) pocket. Substrate is bound by residues K438 and K440. Residue T457 is modified to Phosphothreonine. Phosphoserine is present on S460. One can recognise a PI-PLC Y-box domain in the interval L492–R609. Residues S522 and R549 each contribute to the substrate site. Positions R609–S737 constitute a C2 domain. Residues I651, D653, N677, D706, Y707, and D708 each contribute to the Ca(2+) site.

In terms of assembly, interacts with TGM2. It depends on Ca(2+) as a cofactor.

It catalyses the reaction a 1,2-diacyl-sn-glycero-3-phospho-(1D-myo-inositol-4,5-bisphosphate) + H2O = 1D-myo-inositol 1,4,5-trisphosphate + a 1,2-diacyl-sn-glycerol + H(+). It carries out the reaction a 1,2-diacyl-sn-glycero-3-phospho-(1D-myo-inositol) + H2O = 1D-myo-inositol 1-phosphate + a 1,2-diacyl-sn-glycerol + H(+). In terms of biological role, the production of the second messenger molecules diacylglycerol (DAG) and inositol 1,4,5-trisphosphate (IP3) is mediated by activated phosphatidylinositol-specific phospholipase C enzymes. Essential for trophoblast and placental development. Binds phosphatidylinositol 4,5-bisphosphate. The chain is 1-phosphatidylinositol 4,5-bisphosphate phosphodiesterase delta-1 from Rattus norvegicus (Rat).